We begin with the raw amino-acid sequence, 393 residues long: Probable acetyl-CoA acyltransferase (393 aa).

Catalysis depends on C88, which acts as the Acyl-thioester intermediate. Active-site proton acceptor residues include H349 and C378.

The protein belongs to the thiolase-like superfamily. Thiolase family.

Its subcellular location is the cytoplasm. The catalysed reaction is 2 acetyl-CoA = acetoacetyl-CoA + CoA. This chain is Probable acetyl-CoA acyltransferase, found in Staphylococcus aureus (strain bovine RF122 / ET3-1).